Reading from the N-terminus, the 110-residue chain is Large ribosomal subunit protein uL24 (110 aa).

The protein belongs to the universal ribosomal protein uL24 family. As to quaternary structure, part of the 50S ribosomal subunit.

Its function is as follows. One of two assembly initiator proteins, it binds directly to the 5'-end of the 23S rRNA, where it nucleates assembly of the 50S subunit. One of the proteins that surrounds the polypeptide exit tunnel on the outside of the subunit. The protein is Large ribosomal subunit protein uL24 of Desulfovibrio desulfuricans (strain ATCC 27774 / DSM 6949 / MB).